The chain runs to 85 residues: Colicin E3 immunity protein (85 aa).

The protein belongs to the cloacin immunity protein family. As to quaternary structure, native colicin E3 is a 1:1 complex of A chain and protein B (Im3). Binds between the translocation and cytotoxic RNase domains of intact ColE3, blocking access to the 16S rRNA substrate. Forms a very tight 1:1 complex with the cytotoxic fragment (residues 456-551) of ColE3 (ceaC).

Its function is as follows. The cognate immunity protein for colicin E3 (ColE3), protects cells which harbor the plasmid ColE3 against the toxic action of ColE3. This protein inhibits the 16S RNA hydrolyzing activity of ColE3 by binding with very high affinity to the C-terminal catalytic domain of ColE3. The sequence is that of Colicin E3 immunity protein from Escherichia coli.